A 246-amino-acid chain; its full sequence is tRNA pseudouridine synthase A (246 aa).

D52 acts as the Nucleophile in catalysis. Y111 contacts substrate.

It belongs to the tRNA pseudouridine synthase TruA family. Homodimer.

The catalysed reaction is uridine(38/39/40) in tRNA = pseudouridine(38/39/40) in tRNA. Functionally, formation of pseudouridine at positions 38, 39 and 40 in the anticodon stem and loop of transfer RNAs. This chain is tRNA pseudouridine synthase A, found in Ehrlichia ruminantium (strain Gardel).